The following is a 143-amino-acid chain: Midkine (143 aa).

A signal peptide spans 1–20 (MQHRGFLLLTLLALLALTSA). Intrachain disulfides connect C37/C61, C45/C70, C52/C74, C84/C116, and C94/C126.

Belongs to the pleiotrophin family. As to quaternary structure, homodimer. Interacts with ALK. Interacts with LRP1; promotes neuronal survival. Interacts with LRP2. Interacts with NCAM1. Interacts (via C-terminal) with PTPRZ1 (via chondroitin sulfate chains); this interaction is inhibited by PTN; this interaction promotes neuronal migration. Interacts with NCL; this interaction promotes NCL clustering and lateral movements of this complex into lipid rafts leading to MDK internalization. Interacts with LRP6 and LRP8: this interaction is calcium dependent. Interacts with ITGA4. Interacts with ITGA6. Interacts with ITGB1. Interacts with ITGA4:ITGB1 complex; this interaction mediates MDK-induced osteoblast cells migration through PXN phosphorylation. Interacts with ITGA6:ITGB1 complex; this interaction mediates MDK-induced neurite outgrowth. Interacts with NOTCH2; this interaction mediates a nuclear accumulation of NOTCH2 and therefore activation of NOTCH2 signaling leading to interaction between HES1 and STAT3. Interacts with GPC2 (via heparan sulfate chain); this interaction is inhibited by heparin followed by chondroitin sulfate E; this interaction induces GPC2 clustering through heparan sulfate chain; this interaction induces neuronal cell adhesion and neurite outgrowth. Interacts with SDC3; this interaction induces SDC3 clustering; this interaction induces neuronal cell adhesion and neurite outgrowth. Interacts with SDC1. Interacts with CSPG5; this interaction promotes elongation of oligodendroglial precursor-like cells. In terms of tissue distribution, expressed in various tumor cell lines. In insulinoma tissue predominantly expressed in precancerous lesions.

It localises to the secreted. In terms of biological role, secreted protein that functions as a cytokine and growth factor and mediates its signal through cell-surface proteoglycan and non-proteoglycan receptors. Binds cell-surface proteoglycan receptors via their chondroitin sulfate (CS) groups. Thereby regulates many processes like inflammatory response, cell proliferation, cell adhesion, cell growth, cell survival, tissue regeneration, cell differentiation and cell migration. Participates in inflammatory processes by exerting two different activities. Firstly, mediates neutrophils and macrophages recruitment to the sites of inflammation both by direct action by cooperating namely with ITGB2 via LRP1 and by inducing chemokine expression. This inflammation can be accompanied by epithelial cell survival and smooth muscle cell migration after renal and vessel damage, respectively. Secondly, suppresses the development of tolerogenic dendric cells thereby inhibiting the differentiation of regulatory T cells and also promote T cell expansion through NFAT signaling and Th1 cell differentiation. Promotes tissue regeneration after injury or trauma. After heart damage negatively regulates the recruitment of inflammatory cells and mediates cell survival through activation of anti-apoptotic signaling pathways via MAPKs and AKT pathways through the activation of angiogenesis. Also facilitates liver regeneration as well as bone repair by recruiting macrophage at trauma site and by promoting cartilage development by facilitating chondrocyte differentiation. Plays a role in brain by promoting neural precursor cells survival and growth through interaction with heparan sulfate proteoglycans. Binds PTPRZ1 and promotes neuronal migration and embryonic neurons survival. Binds SDC3 or GPC2 and mediates neurite outgrowth and cell adhesion. Binds chondroitin sulfate E and heparin leading to inhibition of neuronal cell adhesion induced by binding with GPC2. Binds CSPG5 and promotes elongation of oligodendroglial precursor-like cells. Also binds ITGA6:ITGB1 complex; this interaction mediates MDK-induced neurite outgrowth. Binds LRP1; promotes neuronal survival. Binds ITGA4:ITGB1 complex; this interaction mediates MDK-induced osteoblast cells migration through PXN phosphorylation. Binds anaplastic lymphoma kinase (ALK) which induces ALK activation and subsequent phosphorylation of the insulin receptor substrate (IRS1), followed by the activation of mitogen-activated protein kinase (MAPK) and PI3-kinase, and the induction of cell proliferation. Promotes epithelial to mesenchymal transition through interaction with NOTCH2. During arteriogenesis, plays a role in vascular endothelial cell proliferation by inducing VEGFA expression and release which in turn induces nitric oxide synthase expression. Moreover activates vasodilation through nitric oxide synthase activation. Negatively regulates bone formation in response to mechanical load by inhibiting Wnt/beta-catenin signaling in osteoblasts. In addition plays a role in hippocampal development, working memory, auditory response, early fetal adrenal gland development and the female reproductive system. This is Midkine from Homo sapiens (Human).